A 404-amino-acid chain; its full sequence is Ubiquitin-like modifier-activating enzyme 5 (404 aa).

Residue Ser45 is modified to Phosphoserine. Positions 83, 104, 127, 150, and 184 each coordinate ATP. Zn(2+) is bound by residues Cys226 and Cys229. Cys250 (glycyl thioester intermediate) is an active-site residue. The Zn(2+) site is built by Cys303 and Cys308. The UFM1-interacting sequence (UIS) motif lies at 334-346 (IIHEDNEWGIELV). The interval 347–377 (SEVSEEELKNFSGPVPDLPEGITVAYTIPKK) is linker. Residues Ser358 and Ser393 each carry the phosphoserine modification. Positions 389 to 404 (DSGESLEDLMAKMKNM) match the UFC1-binding sequence (UFC) motif.

This sequence belongs to the ubiquitin-activating E1 family. UBA5 subfamily. As to quaternary structure, homodimer; homodimerization is required for UFM1 activation. Interacts (via UIS motif) with UFM1; binds UFM1 via a trans-binding mechanism in which UFM1 interacts with distinct sites in both subunits of the UBA5 homodimer. Interacts (via C-terminus) with UFC1. Interacts (via UIS motif) with GABARAPL2 and, with lower affinity, with GABARAP and GABARAPL1. In terms of tissue distribution, widely expressed.

The protein localises to the cytoplasm. Its subcellular location is the nucleus. The protein resides in the endoplasmic reticulum membrane. It is found in the golgi apparatus. E1-like enzyme which specifically catalyzes the first step in ufmylation. Activates UFM1 by first adenylating its C-terminal glycine residue with ATP, and thereafter linking this residue to the side chain of a cysteine residue in E1, yielding a UFM1-E1 thioester and free AMP. Activates UFM1 via a trans-binding mechanism, in which UFM1 interacts with distinct sites in both subunits of the UBA5 homodimer. Trans-binding also promotes stabilization of the UBA5 homodimer, and enhances ATP-binding. Transfer of UFM1 from UBA5 to the E2-like enzyme UFC1 also takes place using a trans mechanism. Ufmylation plays a key role in various processes, such as ribosome recycling, response to DNA damage, interferon response or reticulophagy (also called ER-phagy). Ufmylation is essential for erythroid differentiation of both megakaryocytes and erythrocytes. The chain is Ubiquitin-like modifier-activating enzyme 5 from Homo sapiens (Human).